The following is a 328-amino-acid chain: Methionyl-tRNA formyltransferase (328 aa).

(6S)-5,6,7,8-tetrahydrofolate is bound at residue 121–124 (SLLP).

The protein belongs to the Fmt family.

It catalyses the reaction L-methionyl-tRNA(fMet) + (6R)-10-formyltetrahydrofolate = N-formyl-L-methionyl-tRNA(fMet) + (6S)-5,6,7,8-tetrahydrofolate + H(+). Functionally, attaches a formyl group to the free amino group of methionyl-tRNA(fMet). The formyl group appears to play a dual role in the initiator identity of N-formylmethionyl-tRNA by promoting its recognition by IF2 and preventing the misappropriation of this tRNA by the elongation apparatus. In Burkholderia thailandensis (strain ATCC 700388 / DSM 13276 / CCUG 48851 / CIP 106301 / E264), this protein is Methionyl-tRNA formyltransferase.